Consider the following 843-residue polypeptide: N-acetyltransferase ESCO1 (843 aa).

A disordered region spans residues 1-78; sequence MSIQEKSKEN…SASCSADKTA (78 aa). The span at 18-28 shows a compositional bias: acidic residues; sequence SEDENLEEEVE. A compositionally biased stretch (polar residues) spans 66 to 78; the sequence is STRSASCSADKTA. Serine 202 carries the phosphoserine modification. The segment at 262–300 is disordered; the sequence is NELRKSAHTQVSTSTKRPQIPLPLVPEHSDDQELEQAGK. Polar residues predominate over residues 269 to 278; it reads HTQVSTSTKR. Lysine 335 is covalently cross-linked (Glycyl lysine isopeptide (Lys-Gly) (interchain with G-Cter in SUMO2)). Serine 415 carries the phosphoserine modification. The disordered stretch occupies residues 546 to 584; that stretch reads DRTFPGSAPNQQHSVLSDEASINRKNRDVPPNHSQLKHD. The segment covering 566 to 584 has biased composition (basic and acidic residues); sequence SINRKNRDVPPNHSQLKHD. Residues 620–644 form a CCHH-type zinc finger; sequence VSCNICGMLYTASNPEDETQHLLFH. Residues 775 to 777, 783 to 788, and 815 to 817 contribute to the acetyl-CoA site; these read IWV, RKKIAS, and TPD.

The protein belongs to the acetyltransferase family. ECO subfamily. In terms of assembly, the subunit structure is controversial. Monomer. Homodimer. Phosphorylated during mitosis.

It is found in the nucleus. It localises to the chromosome. It catalyses the reaction L-lysyl-[protein] + acetyl-CoA = N(6)-acetyl-L-lysyl-[protein] + CoA + H(+). Functionally, acetyltransferase required for the establishment of sister chromatid cohesion. Couples the processes of cohesion and DNA replication to ensure that only sister chromatids become paired together. In contrast to the structural cohesins, the deposition and establishment factors are required only during S phase. Acts by mediating the acetylation of cohesin component SMC3. The sequence is that of N-acetyltransferase ESCO1 (Esco1) from Mus musculus (Mouse).